Reading from the N-terminus, the 559-residue chain is Tissue-type plasminogen activator (559 aa).

The first 17 residues, M1 to T17, serve as a signal peptide directing secretion. Residues L18–R29 constitute a propeptide that is removed on maturation. Positions G30 to R32 are cleaved as a propeptide — removed by plasmin. One can recognise a Fibronectin type-I domain in the interval A36–V78. 17 disulfide bridges follow: C38/C68, C66/C75, C83/C94, C88/C105, C107/C116, C124/C205, C145/C187, C176/C200, C213/C294, C234/C276, C265/C289, C297/C428, C340/C356, C348/C417, C442/C516, C474/C490, and C506/C534. Residues R39 to Q49 form an important for binding to annexin A2 region. Residues P79–D117 form the EGF-like domain. 2 consecutive Kringle domains span residues C124–C205 and C213–C294. N149 carries an N-linked (GlcNAc...) asparagine glycan. The Peptidase S1 domain occupies I309–K558. Active-site charge relay system residues include H355 and D404. N481 carries N-linked (GlcNAc...) asparagine glycosylation. The active-site Charge relay system is S510.

It belongs to the peptidase S1 family. As to quaternary structure, heterodimer of chain A and chain B held by a disulfide bond. Binds to fibrin with high affinity. This interaction leads to an increase in the catalytic efficiency of the enzyme due to an increase in affinity for plasminogen. Similarly, binding to heparin increases the activation of plasminogen. Binds to annexin A2, cytokeratin-8, fibronectin and laminin. Binds to mannose receptor and the low-density lipoprotein receptor-related protein (LRP1); these proteins are involved in TPA clearance. Binds LRP1B; binding is followed by internalization and degradation. Forms heterodimer with SERPINA5. Interacts with SERPINE1. In complex with SERPINE1, interacts with SORL1. In terms of processing, the single chain, almost fully active enzyme, can be further processed into a two-chain fully active form by a cleavage after Arg-308 catalyzed by plasmin, tissue kallikrein or factor Xa.

Its subcellular location is the secreted. The protein resides in the extracellular space. It carries out the reaction Specific cleavage of Arg-|-Val bond in plasminogen to form plasmin.. Its activity is regulated as follows. Inhibited by SERPINA5. Inhibited by SERPINE1. In terms of biological role, converts the abundant, but inactive, zymogen plasminogen to plasmin by hydrolyzing a single Arg-Val bond in plasminogen. By controlling plasmin-mediated proteolysis, it plays an important role in tissue remodeling and degradation, in cell migration and many other physiopathological events. During oocyte activation, plays a role in cortical granule reaction in the zona reaction, which contributes to the block to polyspermy. The protein is Tissue-type plasminogen activator (Plat) of Rattus norvegicus (Rat).